Here is a 232-residue protein sequence, read N- to C-terminus: Phosphatidylserine decarboxylase proenzyme (232 aa).

S190 (schiff-base intermediate with substrate; via pyruvic acid) is an active-site residue. S190 bears the Pyruvic acid (Ser); by autocatalysis mark.

This sequence belongs to the phosphatidylserine decarboxylase family. PSD-A subfamily. Heterodimer of a large membrane-associated beta subunit and a small pyruvoyl-containing alpha subunit. Pyruvate serves as cofactor. In terms of processing, is synthesized initially as an inactive proenzyme. Formation of the active enzyme involves a self-maturation process in which the active site pyruvoyl group is generated from an internal serine residue via an autocatalytic post-translational modification. Two non-identical subunits are generated from the proenzyme in this reaction, and the pyruvate is formed at the N-terminus of the alpha chain, which is derived from the carboxyl end of the proenzyme. The post-translation cleavage follows an unusual pathway, termed non-hydrolytic serinolysis, in which the side chain hydroxyl group of the serine supplies its oxygen atom to form the C-terminus of the beta chain, while the remainder of the serine residue undergoes an oxidative deamination to produce ammonia and the pyruvoyl prosthetic group on the alpha chain.

The protein localises to the cell membrane. It carries out the reaction a 1,2-diacyl-sn-glycero-3-phospho-L-serine + H(+) = a 1,2-diacyl-sn-glycero-3-phosphoethanolamine + CO2. It functions in the pathway phospholipid metabolism; phosphatidylethanolamine biosynthesis; phosphatidylethanolamine from CDP-diacylglycerol: step 2/2. In terms of biological role, catalyzes the formation of phosphatidylethanolamine (PtdEtn) from phosphatidylserine (PtdSer). The polypeptide is Phosphatidylserine decarboxylase proenzyme (Brucella abortus (strain S19)).